A 98-amino-acid polypeptide reads, in one-letter code: Large ribosomal subunit protein uL23 (98 aa).

The protein belongs to the universal ribosomal protein uL23 family. In terms of assembly, part of the 50S ribosomal subunit. Contacts protein L29, and trigger factor when it is bound to the ribosome.

Functionally, one of the early assembly proteins it binds 23S rRNA. One of the proteins that surrounds the polypeptide exit tunnel on the outside of the ribosome. Forms the main docking site for trigger factor binding to the ribosome. In Chromohalobacter salexigens (strain ATCC BAA-138 / DSM 3043 / CIP 106854 / NCIMB 13768 / 1H11), this protein is Large ribosomal subunit protein uL23.